The following is a 180-amino-acid chain: Large ribosomal subunit protein uL6 (180 aa).

This sequence belongs to the universal ribosomal protein uL6 family. In terms of assembly, part of the 50S ribosomal subunit.

This protein binds to the 23S rRNA, and is important in its secondary structure. It is located near the subunit interface in the base of the L7/L12 stalk, and near the tRNA binding site of the peptidyltransferase center. This chain is Large ribosomal subunit protein uL6, found in Desulforapulum autotrophicum (strain ATCC 43914 / DSM 3382 / VKM B-1955 / HRM2) (Desulfobacterium autotrophicum).